The chain runs to 114 residues: Replication initiation control protein YabA (114 aa).

Residues histidine 79, cysteine 81, cysteine 95, and cysteine 98 each coordinate Zn(2+).

This sequence belongs to the YabA family. As to quaternary structure, homotetramer. Interacts with both DnaA and DnaN, acting as a bridge between these two proteins. Zn(2+) is required as a cofactor.

The protein resides in the cytoplasm. Its subcellular location is the nucleoid. Its function is as follows. Involved in control of chromosome replication initiation. Inhibits the cooperative binding of DnaA to the oriC region, thus negatively regulating initiation of chromosome replication. Inhibits the ability of DnaA-ATP to form a helix on DNA; does not disassemble preformed DnaA-DNA helices. Decreases the residence time of DnaA on the chromosome at its binding sites (oriC, replication forks and promoter-binding sites). Tethers DnaA to the replication machinery via the DNA polymerase beta sliding clamp subunit (dnaN). Associates with oriC and other DnaA targets on the chromosome in a DnaA-dependent manner. This is Replication initiation control protein YabA from Lactobacillus johnsonii (strain CNCM I-12250 / La1 / NCC 533).